Consider the following 559-residue polypeptide: Tryprostatin B 6-hydroxylase (559 aa).

3 consecutive transmembrane segments (helical) span residues 13 to 35, 48 to 65, and 82 to 104; these read PSVM…HLSY, YVRF…LLYA, and VSLL…RTLF. Cys502 contributes to the heme binding site.

The protein belongs to the cytochrome P450 family. It depends on heme as a cofactor.

The protein resides in the membrane. It catalyses the reaction tryprostatin B + reduced [NADPH--hemoprotein reductase] + O2 = 6-hydroxytryprostatin B + oxidized [NADPH--hemoprotein reductase] + H2O + H(+). It functions in the pathway mycotoxin biosynthesis. Its function is as follows. Cytochrome P450 monooxygenase; part of the gene cluster that mediates the biosynthesis of fumitremorgins, indole alkaloids that carry not only intriguing chemical structures, but also interesting biological and pharmacological activities. The biosynthesis of fumitremorgin-type alkaloids begins by condensation of the two amino acids L-tryptophan and L-proline to brevianamide F, catalyzed by the non-ribosomal peptide synthetase ftmA. Brevianamide F is then prenylated by the prenyltransferase ftmPT1/ftmB in the presence of dimethylallyl diphosphate, resulting in the formation of tryprostatin B. The three cytochrome P450 monooxygenases, ftmP450-1/ftmC, ftmP450-2/ftmE and ftmP450-3/FtmG, are responsible for the conversion of tryprostatin B to 6-hydroxytryprostatin B, tryprostatin A to fumitremorgin C and fumitremorgin C to 12,13-dihydroxyfumitremorgin C, respectively. The putative methyltransferase ftmMT/ftmD is expected for the conversion of 6-hydroxytryprostatin B to tryprostatin A. FtmPT2/FtmH catalyzes the prenylation of 12,13-dihydroxyfumitre-morgin C in the presence of dimethylallyl diphosphate, resulting in the formation of fumitremorgin B. Fumitremorgin B is further converted to verruculogen by ftmOx1/ftmF via the insertion of an endoperoxide bond between the two prenyl moieties. In some fungal species, verruculogen is further converted to fumitremorgin A, but the enzymes involved in this step have not been identified yet. In Aspergillus fumigatus (Neosartorya fumigata), this protein is Tryprostatin B 6-hydroxylase.